A 377-amino-acid polypeptide reads, in one-letter code: Hydrogenase maturation factor HypD (377 aa).

The Fe cation site is built by cysteine 41, cysteine 69, and cysteine 72.

The protein belongs to the HypD family. It depends on [4Fe-4S] cluster as a cofactor.

Its pathway is protein modification; [NiFe] hydrogenase maturation. In terms of biological role, involved in the maturation of [NiFe] hydrogenases. Involved in the biosynthesis of the Fe(CN)(2)CO cofactor. This chain is Hydrogenase maturation factor HypD, found in Rhodobacter capsulatus (Rhodopseudomonas capsulata).